Reading from the N-terminus, the 373-residue chain is Innexin shaking-B (373 aa).

Topologically, residues 1–21 (MLDIFRGLKSLVKISHVNTDS) are cytoplasmic. The chain crosses the membrane as a helical span at residues 22-42 (PVFRLHYSITVIILMSFSLIV). The Extracellular portion of the chain corresponds to 43-106 (TTRQYVGNPI…SAEATAADKK (64 aa)). Residues 107–127 (IYKYYQWVCFCLFFQAILFYT) form a helical membrane-spanning segment. Topologically, residues 128–176 (PRWLWKSWEGGKIHALMMDLDIGICSEIEKKQKKKLLLDYLWDNLRYHN) are cytoplasmic. A helical transmembrane segment spans residues 177 to 199 (WWAYRYYVCEFLSLCNVIGQMFL). At 200-268 (MNRFFDGEFM…ILPLNVVNEK (69 aa)) the chain is on the extracellular side. Residues 269 to 289 (IYIFLWFWFIILTILTTLTIF) form a helical membrane-spanning segment. Residues 290-373 (YRIIIIFSPR…PGMKGEIQDA (84 aa)) lie on the Cytoplasmic side of the membrane.

This sequence belongs to the pannexin family. As to quaternary structure, monomer.

The protein resides in the cell membrane. The protein localises to the cell junction. Its subcellular location is the gap junction. Structural component of the gap junctions at electrical synapses in distal and mid-depth levels in the lamina. In Anopheles gambiae (African malaria mosquito), this protein is Innexin shaking-B.